The sequence spans 890 residues: DNA mismatch repair protein MutS (890 aa).

Position 634–641 (634–641 (GPNMGGKS)) interacts with ATP.

This sequence belongs to the DNA mismatch repair MutS family.

Its function is as follows. This protein is involved in the repair of mismatches in DNA. It is possible that it carries out the mismatch recognition step. This protein has a weak ATPase activity. This Burkholderia pseudomallei (strain K96243) protein is DNA mismatch repair protein MutS.